The primary structure comprises 379 residues: Cytochrome b (379 aa).

A run of 4 helical transmembrane segments spans residues 34-54 (YGSL…FLSM), 78-99 (WLLR…YLHA), 114-134 (WNIG…GYVL), and 179-199 (FFAF…LHIM). Residues His84 and His98 each coordinate heme b. Positions 183 and 197 each coordinate heme b. Residue His202 participates in a ubiquinone binding. 4 helical membrane-spanning segments follow: residues 227-247 (IKDT…VLFE), 289-309 (LGGV…PLTS), 321-341 (LNKT…WIGG), and 349-369 (IIIG…SPTI).

The protein belongs to the cytochrome b family. As to quaternary structure, the main subunits of complex b-c1 are: cytochrome b, cytochrome c1 and the Rieske protein. The cofactor is heme b.

The protein resides in the mitochondrion inner membrane. Component of the ubiquinol-cytochrome c reductase complex (complex III or cytochrome b-c1 complex) that is part of the mitochondrial respiratory chain. The b-c1 complex mediates electron transfer from ubiquinol to cytochrome c. Contributes to the generation of a proton gradient across the mitochondrial membrane that is then used for ATP synthesis. The sequence is that of Cytochrome b (MT-CYB) from Lumbricus terrestris (Common earthworm).